A 796-amino-acid polypeptide reads, in one-letter code: Inactive dipeptidyl peptidase 10 (796 aa).

Over 1–34 (MNQTASVSHHIKCQPSKTIKELGSNSPPQRNWKG) the chain is Cytoplasmic. Residues 1–55 (MNQTASVSHHIKCQPSKTIKELGSNSPPQRNWKGIAIALLVILVVCSLITMSVIL) form a mediates effects on KCND2 region. Residues 35–55 (IAIALLVILVVCSLITMSVIL) traverse the membrane as a helical; Signal-anchor for type II membrane protein segment. The Extracellular segment spans residues 56–796 (LTPDELTNSS…VLPQEPEEDE (741 aa)). 4 N-linked (GlcNAc...) asparagine glycosylation sites follow: N63, N90, N111, and N119. Y138 and Y143 each carry phosphotyrosine. Residues N257, N342, and N748 are each glycosylated (N-linked (GlcNAc...) asparagine).

The protein belongs to the peptidase S9B family. DPPIV subfamily. May form oligomers. Interacts with KCND1. Interacts with KCND2. Identified in a complex with KCND2 and KCNIP3. N-glycosylation is important for cell surface expression, specially at Asn-257, which is crucial. Detected in brain cortex, hippocampus, thalamus and cerebellum Purkinje cells (at protein level).

It is found in the cell membrane. In terms of biological role, promotes cell surface expression of the potassium channel KCND2. Modulates the activity and gating characteristics of the potassium channel KCND2. Has no dipeptidyl aminopeptidase activity. This is Inactive dipeptidyl peptidase 10 (Dpp10) from Rattus norvegicus (Rat).